The following is a 295-amino-acid chain: Nucleotide-binding protein MCA0739 (295 aa).

8–15 lines the ATP pocket; that stretch reads GFSGSGKS. GTP is bound at residue 60-63; it reads DARN.

This sequence belongs to the RapZ-like family.

Its function is as follows. Displays ATPase and GTPase activities. In Methylococcus capsulatus (strain ATCC 33009 / NCIMB 11132 / Bath), this protein is Nucleotide-binding protein MCA0739.